Consider the following 319-residue polypeptide: tRNA U34 carboxymethyltransferase (319 aa).

Carboxy-S-adenosyl-L-methionine contacts are provided by residues lysine 88, tryptophan 102, lysine 107, glycine 126, 176–177 (LE), methionine 192, tyrosine 196, and arginine 311.

The protein belongs to the class I-like SAM-binding methyltransferase superfamily. CmoB family. As to quaternary structure, homotetramer.

It carries out the reaction carboxy-S-adenosyl-L-methionine + 5-hydroxyuridine(34) in tRNA = 5-carboxymethoxyuridine(34) in tRNA + S-adenosyl-L-homocysteine + H(+). In terms of biological role, catalyzes carboxymethyl transfer from carboxy-S-adenosyl-L-methionine (Cx-SAM) to 5-hydroxyuridine (ho5U) to form 5-carboxymethoxyuridine (cmo5U) at position 34 in tRNAs. The protein is tRNA U34 carboxymethyltransferase of Pseudomonas savastanoi pv. phaseolicola (strain 1448A / Race 6) (Pseudomonas syringae pv. phaseolicola (strain 1448A / Race 6)).